The chain runs to 146 residues: Neuropeptide Y receptor type 2 (146 aa).

The Extracellular segment spans residues lysine 1 to histidine 8. An intrachain disulfide couples cysteine 7 to cysteine 87. A helical transmembrane segment spans residues leucine 9–alanine 29. The Cytoplasmic portion of the chain corresponds to leucine 30–serine 49. Residues phenylalanine 50 to phenylalanine 70 form a helical membrane-spanning segment. At arginine 71 to glycine 100 the chain is on the extracellular side. A helical transmembrane segment spans residues threonine 101–phenylalanine 121. Residues serine 122–arginine 146 are Cytoplasmic-facing.

This sequence belongs to the G-protein coupled receptor 1 family.

The protein localises to the cell membrane. Functionally, receptor for neuropeptide Y and peptide YY. The polypeptide is Neuropeptide Y receptor type 2 (NPY2R) (Ovis aries (Sheep)).